Here is a 224-residue protein sequence, read N- to C-terminus: MKKLLLIAATSATILSSSVSFAEGMDHEWYLRIDTGAAMFNEEKDKATGVKLKSNTTVPVALGIGYYISENFRADLTLGTIIGGKLKKSGAATNAPFTRTNVSASHKPTITRLLINGYVDLTNFDMFDVFAGAGVGPALVKEKITYNGITGLSSNTKNRTNISYKLTLGTSAQIVDGVKVELAYSWIDDGRTKSKNVIYQGTSVPTGGMHYQSHNLTAGIRFDI.

A signal peptide spans 1–22 (MKKLLLIAATSATILSSSVSFA).

The protein is Putative adhesin A1G_07050 of Rickettsia rickettsii (strain Sheila Smith).